The chain runs to 162 residues: Caveolin-2 (162 aa).

The Cytoplasmic segment spans residues 1-86; sequence MGLETEKADV…FEISKYVMYK (86 aa). Tyr19 carries the phosphotyrosine; by SRC modification. Residues Ser20 and Ser23 each carry the phosphoserine modification. At Tyr27 the chain carries Phosphotyrosine; by SRC. A Phosphoserine modification is found at Ser36. The segment at residues 87–107 is an intramembrane region (helical); sequence FLTVFLAIPLAFIAGILFATL. At 108-162 the chain is on the cytoplasmic side; sequence SCLHIWILMPFVKTCLMVLPSVQTIWKSVTDVIIAPLCTSVGRCFSSVSLQLSQD.

Belongs to the caveolin family. As to quaternary structure, monomer or homodimer. Interacts with CAV1; the interaction forms a stable heterooligomeric complex that is required for targeting to lipid rafts and for caveolae formation. Tyrosine phosphorylated forms do not form heterooligomers with the Tyr-19-phosphorylated form existing as a monomer or dimer, and the Tyr-27-form as a monomer only. Interacts (tyrosine phosphorylated form) with the SH2 domain-containing proteins, RASA1, NCK1 and SRC. Interacts (tyrosine phosphorylated form) with INSR, the interaction (Tyr-27-phosphorylated form) is increased on insulin stimulation. Interacts (Tyr-19 phosphorylated form) with MAPK1 (phosphorylated form); the interaction, promoted by insulin, leads to nuclear location and MAPK1 activation. Interacts with STAT3; the interaction is increased on insulin-induced tyrosine phosphorylation leading to STAT activation. Post-translationally, phosphorylated on serine and tyrosine residues. CAV1 promotes phosphorylation on Ser-23 which then targets the complex to the plasma membrane, lipid rafts and caveolae. Phosphorylation on Ser-36 appears to modulate mitosis in endothelial cells. Phosphorylation on both Tyr-19 and Tyr-27 is required for insulin-induced 'Ser-727' phosphorylation of STAT3 and its activation. Phosphorylation on Tyr-19 is required for insulin-induced phosphorylation of MAPK1 and DNA binding of STAT3. Tyrosine phosphorylation is induced by both EGF and insulin (By. similarity).

The protein resides in the nucleus. It is found in the cytoplasm. The protein localises to the golgi apparatus membrane. Its subcellular location is the cell membrane. It localises to the membrane. The protein resides in the caveola. Functionally, may act as a scaffolding protein within caveolar membranes. Interacts directly with G-protein alpha subunits and can functionally regulate their activity. Acts as an accessory protein in conjunction with CAV1 in targeting to lipid rafts and driving caveolae formation. The Ser-36 phosphorylated form has a role in modulating mitosis in endothelial cells. Positive regulator of cellular mitogenesis of the MAPK signaling pathway. Required for the insulin-stimulated nuclear translocation and activation of MAPK1 and STAT3, and the subsequent regulation of cell cycle progression. This Pan troglodytes (Chimpanzee) protein is Caveolin-2 (CAV2).